The sequence spans 227 residues: Protein FAM3C (227 aa).

Residues 1-24 form the signal peptide; it reads MRVAGAAKLVVAVAVFLLTFYVIS. Cystine bridges form between C58–C86 and C64–C221. A GG-type lectin domain is found at 67 to 225; the sequence is KHFAFKMASG…VEMEGCIPQK (159 aa).

The protein belongs to the FAM3 family. In terms of tissue distribution, present in most secretory epithelia (at protein level).

It is found in the secreted. The protein resides in the cytoplasmic vesicle. Functionally, may be involved in retinal laminar formation. Promotes epithelial to mesenchymal transition. The chain is Protein FAM3C (FAM3C) from Homo sapiens (Human).